Here is a 405-residue protein sequence, read N- to C-terminus: 4-hydroxy-3-methylbut-2-en-1-yl diphosphate synthase (flavodoxin) (405 aa).

The [4Fe-4S] cluster site is built by cysteine 297, cysteine 300, cysteine 343, and glutamate 350.

This sequence belongs to the IspG family. [4Fe-4S] cluster is required as a cofactor.

It carries out the reaction (2E)-4-hydroxy-3-methylbut-2-enyl diphosphate + oxidized [flavodoxin] + H2O + 2 H(+) = 2-C-methyl-D-erythritol 2,4-cyclic diphosphate + reduced [flavodoxin]. The protein operates within isoprenoid biosynthesis; isopentenyl diphosphate biosynthesis via DXP pathway; isopentenyl diphosphate from 1-deoxy-D-xylulose 5-phosphate: step 5/6. Converts 2C-methyl-D-erythritol 2,4-cyclodiphosphate (ME-2,4cPP) into 1-hydroxy-2-methyl-2-(E)-butenyl 4-diphosphate. The sequence is that of 4-hydroxy-3-methylbut-2-en-1-yl diphosphate synthase (flavodoxin) from Francisella tularensis subsp. mediasiatica (strain FSC147).